We begin with the raw amino-acid sequence, 148 residues long: Lysozyme C (148 aa).

The first 18 residues, 1–18, serve as a signal peptide directing secretion; the sequence is MKAVIILGLVLLSVTVQG. Residues 19 to 148 enclose the C-type lysozyme domain; the sequence is KIFERCELAR…VSQYVQGCGV (130 aa). 4 disulfide bridges follow: Cys-24/Cys-146, Cys-48/Cys-134, Cys-83/Cys-99, and Cys-95/Cys-113. Catalysis depends on residues Glu-53 and Asp-71.

The protein belongs to the glycosyl hydrolase 22 family. Monomer.

Its subcellular location is the secreted. The enzyme catalyses Hydrolysis of (1-&gt;4)-beta-linkages between N-acetylmuramic acid and N-acetyl-D-glucosamine residues in a peptidoglycan and between N-acetyl-D-glucosamine residues in chitodextrins.. In terms of biological role, lysozymes have primarily a bacteriolytic function; those in tissues and body fluids are associated with the monocyte-macrophage system and enhance the activity of immunoagents. The chain is Lysozyme C (LYZ) from Macaca mulatta (Rhesus macaque).